A 219-amino-acid chain; its full sequence is Ribose-5-phosphate isomerase A (219 aa).

Substrate is bound by residues 28 to 31, 81 to 84, and 94 to 97; these read SGST, DGAD, and KGGG. Glu-103 (proton acceptor) is an active-site residue. Lys-121 contributes to the substrate binding site.

This sequence belongs to the ribose 5-phosphate isomerase family. As to quaternary structure, homodimer.

It carries out the reaction aldehydo-D-ribose 5-phosphate = D-ribulose 5-phosphate. It participates in carbohydrate degradation; pentose phosphate pathway; D-ribose 5-phosphate from D-ribulose 5-phosphate (non-oxidative stage): step 1/1. Its function is as follows. Catalyzes the reversible conversion of ribose-5-phosphate to ribulose 5-phosphate. In Glaesserella parasuis serovar 5 (strain SH0165) (Haemophilus parasuis), this protein is Ribose-5-phosphate isomerase A.